A 383-amino-acid chain; its full sequence is Centractin (383 aa).

The tract at residues 227 to 246 (PQKEEELLEPDSSSSKPVQP) is disordered.

Belongs to the actin family. ARP1 subfamily.

It localises to the cytoplasm. It is found in the cytoskeleton. The protein resides in the microtubule organizing center. The protein localises to the centrosome. Its function is as follows. Component of a multi-subunit complex, PPK2 (poly P kinase complex 2) involved in microtubule based vesicle motility. It is associated with the centrosome. PPK2 complex can synthesize a poly chain of hundreds of phosphate residues linked by ATP-like bonds. The protein is Centractin (arpA) of Dictyostelium discoideum (Social amoeba).